Here is a 112-residue protein sequence, read N- to C-terminus: TGEKPFICSDCGKCFNDSSILIRHMKIHTGEKPFCCPQCGRKFRRRAHLIVHERTHTGEKPFTCPECGKSFARRSHLMDHRIIHNGEKKYSCPECGKCFGLQGYLNKHFKIH.

C2H2-type zinc fingers lie at residues 6–28, 34–56, 62–84, and 90–112; these read FICS…MKIH, FCCP…ERTH, FTCP…RIIH, and YSCP…FKIH.

The protein belongs to the krueppel C2H2-type zinc-finger protein family.

The protein resides in the nucleus. Functionally, may be involved in transcriptional regulation. This is Gastrula zinc finger protein XlCGF9.1 from Xenopus laevis (African clawed frog).